The sequence spans 753 residues: 5-methyltetrahydropteroyltriglutamate--homocysteine methyltransferase (753 aa).

5-methyltetrahydropteroyltri-L-glutamate contacts are provided by residues 17–20 (RELK) and Lys117. Residues 431-433 (IGS) and Glu484 contribute to the L-homocysteine site. Residues 431–433 (IGS) and Glu484 contribute to the L-methionine site. Residues 515 to 516 (RC) and Trp561 contribute to the 5-methyltetrahydropteroyltri-L-glutamate site. Asp599 lines the L-homocysteine pocket. Asp599 lines the L-methionine pocket. Glu605 is a 5-methyltetrahydropteroyltri-L-glutamate binding site. Zn(2+)-binding residues include His641, Cys643, and Glu665. His694 acts as the Proton donor in catalysis. Cys726 provides a ligand contact to Zn(2+).

Belongs to the vitamin-B12 independent methionine synthase family. The cofactor is Zn(2+).

The enzyme catalyses 5-methyltetrahydropteroyltri-L-glutamate + L-homocysteine = tetrahydropteroyltri-L-glutamate + L-methionine. The protein operates within amino-acid biosynthesis; L-methionine biosynthesis via de novo pathway; L-methionine from L-homocysteine (MetE route): step 1/1. Catalyzes the transfer of a methyl group from 5-methyltetrahydrofolate to homocysteine resulting in methionine formation. In Escherichia coli (strain UTI89 / UPEC), this protein is 5-methyltetrahydropteroyltriglutamate--homocysteine methyltransferase.